Here is a 248-residue protein sequence, read N- to C-terminus: Mannose-binding protein C (248 aa).

An N-terminal signal peptide occupies residues 1 to 20; that stretch reads MSPFLSLPLLLLSVLSASYS. The tract at residues 36 to 112 is disordered; that stretch reads IACSSPGING…GDSSLAASER (77 aa). The Collagen-like domain maps to 42–99; it reads GINGFPGKDGRDGTKGEKGEPGQGLRGLQGPPGKLGPPGNPGPSGSPGAKGQKGDPGA. Pro-47 carries the 4-hydroxyproline modification. Residues 49–61 show a composition bias toward basic and acidic residues; it reads KDGRDGTKGEKGE. Pro-73, Pro-79, Pro-82, and Pro-88 each carry 4-hydroxyproline. Positions 112-130 form a coiled coil; sequence RKALQTEMARIKKWVTFSL. The C-type lectin domain occupies 134 to 245; it reads VGKKLFLSNG…CSSSHLAICE (112 aa). Cystine bridges form between Cys-155/Cys-244 and Cys-222/Cys-236.

As to quaternary structure, oligomeric complex of 3 or more homotrimers. Interacts with MASP1 and MASP2. Interacts with MEP1A and MEP1B and may inhibit their catalytic activity. Post-translationally, hydroxylation on proline residues within the sequence motif, GXPG, is most likely to be 4-hydroxy as this fits the requirement for 4-hydroxylation in vertebrates.

Its subcellular location is the secreted. Its function is as follows. Calcium-dependent lectin involved in innate immune defense. Binds mannose, fucose and N-acetylglucosamine on different microorganisms and activates the lectin complement pathway. Binds to late apoptotic cells, as well as to apoptotic blebs and to necrotic cells, but not to early apoptotic cells, facilitating their uptake by macrophages. This chain is Mannose-binding protein C (MBL2), found in Saguinus oedipus (Cotton-top tamarin).